A 226-amino-acid chain; its full sequence is Thioredoxin domain-containing protein 9 (226 aa).

The 107-residue stretch at 74 to 180 folds into the Thioredoxin domain; sequence REIPSERDFF…TTETLEWRLG (107 aa). Ser-188, Ser-221, and Ser-223 each carry phosphoserine.

As to quaternary structure, forms ternary complexes with the chaperonin TCP1 complex, spanning the cylindrical chaperonin cavity and contacting at least 2 subunits.

Its subcellular location is the cytoplasm. The protein localises to the nucleus. It localises to the cytoskeleton. The protein resides in the microtubule organizing center. It is found in the centrosome. Its subcellular location is the midbody. In terms of biological role, significantly diminishes the chaperonin TCP1 complex ATPase activity, thus negatively impacts protein folding, including that of actin or tubulin. This is Thioredoxin domain-containing protein 9 (TXNDC9) from Homo sapiens (Human).